Here is a 521-residue protein sequence, read N- to C-terminus: Vang-like protein 2 (521 aa).

The disordered stretch occupies residues 1–81 (MDTESQYSGY…TTVVTGTSEH (81 aa)). Over 1–108 (MDTESQYSGY…VPLDCSRHLG (108 aa)) the chain is Cytoplasmic. The span at 15 to 33 (GHSRSSRKHRDRRDRHRSK) shows a compositional bias: basic residues. Over residues 57–67 (ESTRGDERDDN) the composition is skewed to basic and acidic residues. The segment covering 69–81 (GETTTVVTGTSEH) has biased composition (low complexity). Residues 109-129 (VAAGATLALLSFLTPLAFLLL) traverse the membrane as a helical segment. Over 130 to 147 (PPLLWREELEPCGTACEG) the chain is Extracellular. The chain crosses the membrane as a helical span at residues 148 to 168 (LFISVAFKLLILLLGSWALFF). Over 169-178 (RRPKASLPRV) the chain is Cytoplasmic. The chain crosses the membrane as a helical span at residues 179–199 (FVLRALLMVLVFLLVVSYWLF). Over 200–217 (YGVRILDARERSYQGVVQ) the chain is Extracellular. A helical membrane pass occupies residues 218-238 (FAVSLVDALLFVHYLAVVLLE). Residues 239–521 (LRQLQPQFTL…VMRLQSETSV (283 aa)) are Cytoplasmic-facing.

It belongs to the Vang family. As to quaternary structure, homodimer and heterodimer with VANGL1. Interacts through its C-terminal region with the N-terminal half of DVL1, DVL2 and DVL3. The PDZ domain of DVL1, DVL2 and DVL3 is required for the interaction. Also interacts with the PDZ domains of MAGI3, SCRIB/SCRB1 and FZD3. Interacts with PRICKLE3.

The protein localises to the cell membrane. In terms of biological role, involved in the control of early morphogenesis and patterning of both axial midline structures and the development of neural plate. Plays a role in the regulation of planar cell polarity, particularly in the orientation of stereociliary bundles in the cochlea. Required for polarization and movement of myocardializing cells in the outflow tract and seems to act via RHOA signaling to regulate this process. Required for cell surface localization of FZD3 and FZD6 in the inner ear. This is Vang-like protein 2 (VANGL2) from Homo sapiens (Human).